A 150-amino-acid polypeptide reads, in one-letter code: MNDDSSSSSSGDSSDGSSGTTIVQTNSYPWSAYGRWVVVIICIAALIFFFFIIGIINRRRTKKGQATIPFTNFYPLTAPPPYTAEPEARYNSTIHNPMPPMSQAYRPPPTEPPTVPAYETSSEFPPPAYPEAAATSDAAFRKYDGYAKLG.

The segment covering 1 to 19 (MNDDSSSSSSGDSSDGSSG) has biased composition (low complexity). Disordered regions lie at residues 1 to 21 (MNDDSSSSSSGDSSDGSSGTT) and 85 to 131 (EPEA…AYPE). The segment covering 106 to 115 (RPPPTEPPTV) has biased composition (pro residues).

This is an uncharacterized protein from Schizosaccharomyces pombe (strain 972 / ATCC 24843) (Fission yeast).